Here is a 396-residue protein sequence, read N- to C-terminus: Pre-mRNA-splicing regulator WTAP (396 aa).

Residue methionine 1 is modified to N-acetylmethionine. Position 14 is a phosphoserine (serine 14). 2 stretches are compositionally biased toward low complexity: residues 240 to 257 (QQQQ…TTSS) and 278 to 291 (SNGS…SGSG). The segment at 240-396 (QQQQSQASAP…SSVNVQGAVL (157 aa)) is disordered. Phosphoserine is present on residues serine 297, serine 305, serine 306, and serine 341. The segment covering 305 to 316 (SSSGNGNKASNS) has biased composition (low complexity). A compositionally biased stretch (polar residues) spans 340 to 351 (DSPTGSENSLTH). Threonine 350 bears the Phosphothreonine mark. Residues 352 to 368 (HSNDTDSSHDPQEEKAV) are compositionally biased toward basic and acidic residues. Residues 380–396 (HVQNGLDSSVNVQGAVL) show a composition bias toward polar residues. Phosphoserine is present on serine 388.

It belongs to the fl(2)d family. In terms of assembly, component of the WMM complex, a N6-methyltransferase complex composed of a catalytic subcomplex, named MAC, and of an associated subcomplex, named MACOM. The MAC subcomplex is composed of METTL3 and METTL14. The MACOM subcomplex is composed of WTAP, ZC3H13, CBLL1/HAKAI, VIRMA, and, in some cases of RBM15 (RBM15 or RBM15B). Interacts with WT1. Also a component of a MACOM-like complex, named WTAP complex, composed of WTAP, ZC3H13, CBLL1, VIRMA, RBM15, BCLAF1 and THRAP3. Interacts with CPNE4 (via VWFA domain).

The protein localises to the nucleus speckle. It is found in the nucleus. It localises to the nucleoplasm. The protein resides in the cytoplasm. Functionally, associated component of the WMM complex, a complex that mediates N6-methyladenosine (m6A) methylation of RNAs, a modification that plays a role in the efficiency of mRNA splicing and RNA processing. Acts as a key regulator of m6A methylation by promoting m6A methylation of mRNAs at the 3'-UTR. Required for accumulation of METTL3 and METTL14 to nuclear speckle. Acts as a mRNA splicing regulator. Regulates G2/M cell-cycle transition by binding to the 3' UTR of CCNA2, which enhances its stability. Impairs WT1 DNA-binding ability and inhibits expression of WT1 target genes. The sequence is that of Pre-mRNA-splicing regulator WTAP from Mus musculus (Mouse).